A 374-amino-acid chain; its full sequence is Chaperone protein DnaJ (374 aa).

The J domain maps to 6–70 (DYYDILGVSK…QKRAQYDQFG (65 aa)). A CR-type zinc finger spans residues 135 to 217 (GKKTTIKYSR…CGGTGHTSQQ (83 aa)). The Zn(2+) site is built by Cys148, Cys151, Cys165, Cys168, Cys191, Cys194, Cys205, and Cys208. CXXCXGXG motif repeat units follow at residues 148–155 (CKTCGGSG), 165–172 (CHKCNGTG), 191–198 (CDVCNGTG), and 205–212 (CPTCGGTG). Disordered stretches follow at residues 308–328 (GTNFRLKGKGAPRLRGNGTGD) and 347–374 (EALKQFAKASGEEPSGHGKSGFFDKFMN).

The protein belongs to the DnaJ family. In terms of assembly, homodimer. Zn(2+) serves as cofactor.

It localises to the cytoplasm. Functionally, participates actively in the response to hyperosmotic and heat shock by preventing the aggregation of stress-denatured proteins and by disaggregating proteins, also in an autonomous, DnaK-independent fashion. Unfolded proteins bind initially to DnaJ; upon interaction with the DnaJ-bound protein, DnaK hydrolyzes its bound ATP, resulting in the formation of a stable complex. GrpE releases ADP from DnaK; ATP binding to DnaK triggers the release of the substrate protein, thus completing the reaction cycle. Several rounds of ATP-dependent interactions between DnaJ, DnaK and GrpE are required for fully efficient folding. Also involved, together with DnaK and GrpE, in the DNA replication of plasmids through activation of initiation proteins. The chain is Chaperone protein DnaJ from Pediococcus pentosaceus (strain ATCC 25745 / CCUG 21536 / LMG 10740 / 183-1w).